A 306-amino-acid polypeptide reads, in one-letter code: Ornithine carbamoyltransferase (306 aa).

Carbamoyl phosphate contacts are provided by residues Ser53–Thr56, Gln80, Arg104, and His131–Gln134. Residues Asn162, Asp219, and Ser223–Met224 each bind L-ornithine. Carbamoyl phosphate is bound by residues Cys259–Leu260 and Arg287.

The protein belongs to the aspartate/ornithine carbamoyltransferase superfamily. OTCase family.

Its subcellular location is the cytoplasm. The catalysed reaction is carbamoyl phosphate + L-ornithine = L-citrulline + phosphate + H(+). It functions in the pathway amino-acid biosynthesis; L-arginine biosynthesis; L-arginine from L-ornithine and carbamoyl phosphate: step 1/3. In terms of biological role, reversibly catalyzes the transfer of the carbamoyl group from carbamoyl phosphate (CP) to the N(epsilon) atom of ornithine (ORN) to produce L-citrulline. The sequence is that of Ornithine carbamoyltransferase from Pseudomonas syringae pv. tomato (strain ATCC BAA-871 / DC3000).